The primary structure comprises 247 residues: uncharacterized protein (247 aa).

Leu-11, Asn-85, and Lys-119 together coordinate NADP(+). Residue Ser-136 is the Proton donor of the active site. NADP(+) contacts are provided by Tyr-150, Lys-154, Val-181, and Thr-183. The active-site Proton acceptor is Tyr-150. Lys-154 acts as the Lowers pKa of active site Tyr in catalysis.

It belongs to the short-chain dehydrogenases/reductases (SDR) family.

This is an uncharacterized protein from Schizosaccharomyces pombe (strain 972 / ATCC 24843) (Fission yeast).